Reading from the N-terminus, the 589-residue chain is Proline--tRNA ligase (589 aa).

The protein belongs to the class-II aminoacyl-tRNA synthetase family. ProS type 1 subfamily. Homodimer.

The protein resides in the cytoplasm. The enzyme catalyses tRNA(Pro) + L-proline + ATP = L-prolyl-tRNA(Pro) + AMP + diphosphate. In terms of biological role, catalyzes the attachment of proline to tRNA(Pro) in a two-step reaction: proline is first activated by ATP to form Pro-AMP and then transferred to the acceptor end of tRNA(Pro). As ProRS can inadvertently accommodate and process non-cognate amino acids such as alanine and cysteine, to avoid such errors it has two additional distinct editing activities against alanine. One activity is designated as 'pretransfer' editing and involves the tRNA(Pro)-independent hydrolysis of activated Ala-AMP. The other activity is designated 'posttransfer' editing and involves deacylation of mischarged Ala-tRNA(Pro). The misacylated Cys-tRNA(Pro) is not edited by ProRS. The protein is Proline--tRNA ligase of Gloeobacter violaceus (strain ATCC 29082 / PCC 7421).